The sequence spans 66 residues: Large ribosomal subunit protein bL35 (66 aa).

Belongs to the bacterial ribosomal protein bL35 family.

This chain is Large ribosomal subunit protein bL35, found in Brucella anthropi (strain ATCC 49188 / DSM 6882 / CCUG 24695 / JCM 21032 / LMG 3331 / NBRC 15819 / NCTC 12168 / Alc 37) (Ochrobactrum anthropi).